The chain runs to 277 residues: Large ribosomal subunit protein uL2c (277 aa).

Residues 30–60 are disordered; sequence RKKLTSGQHSGKGRNNRGIITSRHRGGGHKR. A compositionally biased stretch (basic residues) spans 51–60; sequence SRHRGGGHKR.

The protein belongs to the universal ribosomal protein uL2 family. As to quaternary structure, part of the 50S ribosomal subunit.

It localises to the plastid. Its subcellular location is the chloroplast. This chain is Large ribosomal subunit protein uL2c (rpl2), found in Angiopteris evecta (Mule's foot fern).